A 209-amino-acid chain; its full sequence is Protein-L-isoaspartate O-methyltransferase (209 aa).

The active site involves Ser-60.

This sequence belongs to the methyltransferase superfamily. L-isoaspartyl/D-aspartyl protein methyltransferase family.

The protein localises to the cytoplasm. It carries out the reaction [protein]-L-isoaspartate + S-adenosyl-L-methionine = [protein]-L-isoaspartate alpha-methyl ester + S-adenosyl-L-homocysteine. Its function is as follows. Catalyzes the methyl esterification of L-isoaspartyl residues in peptides and proteins that result from spontaneous decomposition of normal L-aspartyl and L-asparaginyl residues. It plays a role in the repair and/or degradation of damaged proteins. The protein is Protein-L-isoaspartate O-methyltransferase of Photobacterium profundum (strain SS9).